The chain runs to 372 residues: Putative glutamate--cysteine ligase 2 (372 aa).

The protein belongs to the glutamate--cysteine ligase type 2 family. YbdK subfamily. In terms of assembly, homodimer.

The catalysed reaction is L-cysteine + L-glutamate + ATP = gamma-L-glutamyl-L-cysteine + ADP + phosphate + H(+). Its function is as follows. ATP-dependent carboxylate-amine ligase which exhibits weak glutamate--cysteine ligase activity. The chain is Putative glutamate--cysteine ligase 2 (ybdK) from Escherichia coli O8 (strain IAI1).